Reading from the N-terminus, the 238-residue chain is Probable tetraspanin tspC (238 aa).

The Cytoplasmic segment spans residues 1-16; that stretch reads MVNTRDFLPKTTHYLK. A helical transmembrane segment spans residues 17–37; sequence VPIIGLNAILWLLGLVLIVVG. Over 38 to 69 the chain is Extracellular; sequence SVCISFFSNFKEFTKESGYKNALSNLTTSAPT. A glycan (N-linked (GlcNAc...) asparagine) is linked at Asn-62. Residues 70 to 90 form a helical membrane-spanning segment; the sequence is GVLVIGIFFILLTLVGCFVAY. The Cytoplasmic segment spans residues 91–93; that stretch reads KEK. A helical transmembrane segment spans residues 94–114; it reads LVGLVLYTMLMLILLVVLIGI. The Extracellular portion of the chain corresponds to 115 to 197; the sequence is GGKALTLDKE…GIFTKQVSSK (83 aa). N-linked (GlcNAc...) asparagine glycans are attached at residues Asn-143 and Asn-164. The chain crosses the membrane as a helical span at residues 198-218; sequence LVLVGIAGVVIGCIEFVAMAL. Residues 219-238 lie on the Cytoplasmic side of the membrane; sequence SLFLIIRICRSPRSRAYDQY.

It belongs to the tetraspanin (TM4SF) family.

The protein localises to the membrane. The sequence is that of Probable tetraspanin tspC (tspC) from Dictyostelium discoideum (Social amoeba).